Here is a 393-residue protein sequence, read N- to C-terminus: S-adenosylmethionine synthase (393 aa).

Residue E10 coordinates Mg(2+). An ATP-binding site is contributed by H16. Position 44 (E44) interacts with K(+). L-methionine-binding residues include E57 and Q100. ATP-binding positions include 168-170 (DGK), 236-239 (SGRF), D247, 253-254 (RK), A270, K274, and K278. D247 contacts L-methionine. K278 provides a ligand contact to L-methionine.

The protein belongs to the AdoMet synthase family. As to quaternary structure, homotetramer. Mn(2+) serves as cofactor. It depends on Mg(2+) as a cofactor. Co(2+) is required as a cofactor. Requires K(+) as cofactor.

The protein localises to the cytoplasm. It catalyses the reaction L-methionine + ATP + H2O = S-adenosyl-L-methionine + phosphate + diphosphate. It functions in the pathway amino-acid biosynthesis; S-adenosyl-L-methionine biosynthesis; S-adenosyl-L-methionine from L-methionine: step 1/1. Its function is as follows. Catalyzes the formation of S-adenosylmethionine from methionine and ATP. The reaction comprises two steps that are both catalyzed by the same enzyme: formation of S-adenosylmethionine (AdoMet) and triphosphate, and subsequent hydrolysis of the triphosphate. The polypeptide is S-adenosylmethionine synthase (METK) (Musa acuminata (Banana)).